The sequence spans 92 residues: MKFEAVVRTDLGKGASRRLRHANQFPAIVYGGEEVPVAIVLDHDSVINQMDKPAFYEVITLVIDGKEVQVKPQDIQRHPYKPKVNHMDFKRV.

This sequence belongs to the bacterial ribosomal protein bL25 family. As to quaternary structure, part of the 50S ribosomal subunit; part of the 5S rRNA/L5/L18/L25 subcomplex. Contacts the 5S rRNA. Binds to the 5S rRNA independently of L5 and L18.

In terms of biological role, this is one of the proteins that binds to the 5S RNA in the ribosome where it forms part of the central protuberance. The chain is Large ribosomal subunit protein bL25 from Photobacterium damsela subsp. piscicida (Pasteurella piscicida).